Reading from the N-terminus, the 117-residue chain is Large ribosomal subunit protein eL34 (117 aa).

Serine 12 bears the Phosphoserine mark. Lysine 36 and lysine 43 each carry N6-acetyllysine. Lysine 108 is covalently cross-linked (Glycyl lysine isopeptide (Lys-Gly) (interchain with G-Cter in SUMO2)).

It belongs to the eukaryotic ribosomal protein eL34 family. In terms of assembly, component of the large ribosomal subunit.

The protein localises to the cytoplasm. Its subcellular location is the cytosol. The protein resides in the endoplasmic reticulum. In terms of biological role, component of the large ribosomal subunit. The ribosome is a large ribonucleoprotein complex responsible for the synthesis of proteins in the cell. The protein is Large ribosomal subunit protein eL34 (RPL34) of Sus scrofa (Pig).